The primary structure comprises 307 residues: MNTQAPIKLIDGKAAAARVLAEVAEDVRALKAAGIVPALAVVLVGDDPASQVYVRNKVLRAEECGIRSLEFKLPADTAEARLQALIAELNADASVHGILVQLPLPAHIDEQRVLQAVTPLKDVDGFHAENVGGLSQGREVLTPCTPAGCLRLLQDSCGDLTGKHAVVIGRSNIVGKPMAALLLKAHCSVTVVHSKSANLKTLCRQADIVVAAVGRPRLVDADWLKPGAVVIDVGINRIDENGRSRLVGDVDFDSALPQVSAITPVPGGVGPMTIAYLMKNTLVAARLQQTAPSNLTQRAEAACPSIS.

Residues 169-171 (GRS), S194, and I235 contribute to the NADP(+) site.

Belongs to the tetrahydrofolate dehydrogenase/cyclohydrolase family. As to quaternary structure, homodimer.

It carries out the reaction (6R)-5,10-methylene-5,6,7,8-tetrahydrofolate + NADP(+) = (6R)-5,10-methenyltetrahydrofolate + NADPH. The enzyme catalyses (6R)-5,10-methenyltetrahydrofolate + H2O = (6R)-10-formyltetrahydrofolate + H(+). It functions in the pathway one-carbon metabolism; tetrahydrofolate interconversion. In terms of biological role, catalyzes the oxidation of 5,10-methylenetetrahydrofolate to 5,10-methenyltetrahydrofolate and then the hydrolysis of 5,10-methenyltetrahydrofolate to 10-formyltetrahydrofolate. The chain is Bifunctional protein FolD 3 from Ectopseudomonas mendocina (strain ymp) (Pseudomonas mendocina).